Consider the following 339-residue polypeptide: Protein FAM50A (339 aa).

The interval 1 to 31 is disordered; the sequence is MAQYKGAASEAGRAMHLMKKREKQREQMEQM. A2 carries the N-acetylalanine modification. Residue K100 forms a Glycyl lysine isopeptide (Lys-Gly) (interchain with G-Cter in SUMO2) linkage. The interval 121–177 is disordered; the sequence is SFTLEEEEEGGEEEEEAAMYEEEMEREEITTKKRKLGKNPDVDTSFLPDRDREEEEN. Residues 124–146 are compositionally biased toward acidic residues; that stretch reads LEEEEEGGEEEEEAAMYEEEMER. The Nuclear localization signal motif lies at 152-155; that stretch reads KKRK. Positions 168 to 177 are enriched in basic and acidic residues; the sequence is PDRDREEEEN.

It belongs to the FAM50 family. Interacts with EFTUD2, a component of the spliceosome U5 complex. Interacts with DDX41, a component of the spliceosome C complex. Widely expressed in fetal and adult tissues. Mostly abundant in fetal brain, liver and kidney; in the adult, high levels were also observed in heart, skeletal muscle, spleen, thymus, prostate and small intestine. Expressed in fetal cerebellum and hypothalamus. Low expression is observed in fetal temporal lobe.

Its subcellular location is the nucleus. In terms of biological role, probably involved in the regulation of pre-mRNA splicing. This is Protein FAM50A (FAM50A) from Homo sapiens (Human).